The primary structure comprises 252 residues: Curing of [URE3] protein 1 (252 aa).

The protein resides in the nucleus. Its function is as follows. Involved in the curing of prion [URE3]. Nuclear localization of this protein may suggest a role in transcription regulation, so it might exert an effect on [URE3] through known prion-curing chaperones or BTN2. The polypeptide is Curing of [URE3] protein 1 (CUR1) (Saccharomyces cerevisiae (strain ATCC 204508 / S288c) (Baker's yeast)).